The primary structure comprises 430 residues: Tyrosine--tRNA ligase (430 aa).

Tyr32 lines the L-tyrosine pocket. A 'HIGH' region motif is present at residues 37-46 (PTADSLHIGH). Positions 172 and 176 each coordinate L-tyrosine. The short motif at 232–236 (KFGKT) is the 'KMSKS' region element. Residue Lys235 participates in ATP binding. The region spanning 362–429 (VKAVDLFVDN…GKKNYFLLIA (68 aa)) is the S4 RNA-binding domain.

Belongs to the class-I aminoacyl-tRNA synthetase family. TyrS type 1 subfamily. Homodimer.

The protein resides in the cytoplasm. It carries out the reaction tRNA(Tyr) + L-tyrosine + ATP = L-tyrosyl-tRNA(Tyr) + AMP + diphosphate + H(+). Catalyzes the attachment of tyrosine to tRNA(Tyr) in a two-step reaction: tyrosine is first activated by ATP to form Tyr-AMP and then transferred to the acceptor end of tRNA(Tyr). The polypeptide is Tyrosine--tRNA ligase (Bacteroides thetaiotaomicron (strain ATCC 29148 / DSM 2079 / JCM 5827 / CCUG 10774 / NCTC 10582 / VPI-5482 / E50)).